The chain runs to 248 residues: 5'-nucleotidase SurE (248 aa).

A divalent metal cation is bound by residues aspartate 8, aspartate 9, serine 39, and asparagine 91.

The protein belongs to the SurE nucleotidase family. It depends on a divalent metal cation as a cofactor.

The protein resides in the cytoplasm. The catalysed reaction is a ribonucleoside 5'-phosphate + H2O = a ribonucleoside + phosphate. Functionally, nucleotidase that shows phosphatase activity on nucleoside 5'-monophosphates. This is 5'-nucleotidase SurE from Neisseria meningitidis serogroup C / serotype 2a (strain ATCC 700532 / DSM 15464 / FAM18).